An 813-amino-acid chain; its full sequence is Microtubule-associated protein 6 (813 aa).

3 S-palmitoyl cysteine lipidation sites follow: Cys5, Cys10, and Cys11. Disordered stretches follow at residues 36–283, 314–651, and 756–813; these read ATEH…AAAD, VKPI…KDES, and PLKD…ESSP. The segment covering 41 to 50 has biased composition (pro residues); the sequence is GAPPQPPPPQ. Residues 51–62 show a composition bias toward low complexity; that stretch reads QQAQPALAPPSA. Positions 100–112 are enriched in gly residues; the sequence is GRSGPGPGLGSGS. The residue at position 102 (Ser102) is a Phosphoserine. The interval 118–141 is mn 1; the sequence is DSVMRQDYRAWKVQRPEPSCRPRS. The span at 121–141 shows a compositional bias: basic and acidic residues; it reads MRQDYRAWKVQRPEPSCRPRS. A calmodulin-binding region spans residues 126–140; the sequence is RAWKVQRPEPSCRPR. Position 143 is a phosphotyrosine (Tyr143). Residues 149 to 173 show a composition bias toward basic and acidic residues; the sequence is PFERETQYQKDFRAWPLPRRGDHPW. A mn 2 region spans residues 153 to 176; sequence ETQYQKDFRAWPLPRRGDHPWIPK. The interval 162–176 is calmodulin-binding; sequence AWPLPRRGDHPWIPK. A Phosphoserine modification is found at Ser187. Calmodulin-binding regions lie at residues 189–203, 306–320, 357–371, and 384–398; these read PILGAPKRRPQSQER, RAWTDIKPVKPIKAK, RRRIRSLYSEPFKEP, and PKKTSASHKPTRKAK. Residues 298 to 321 are mn 3; sequence SSSYRNEFRAWTDIKPVKPIKAKP. The segment covering 367-376 has biased composition (basic and acidic residues); that stretch reads PFKEPPKVEK. Residues 383–398 are compositionally biased toward basic residues; that stretch reads KPKKTSASHKPTRKAK. Basic and acidic residues predominate over residues 420–439; sequence KPDDKEQSKEMNNKLAEAKE. The segment covering 443–454 has biased composition (polar residues); that stretch reads QPVSDSSKTQGP. The span at 637-651 shows a compositional bias: basic and acidic residues; the sequence is KDQDPMVPEHPKDES. At Ser812 the chain carries Phosphoserine.

It belongs to the STOP family. In terms of assembly, interacts with calmodulin (via C-terminus); the interaction is dependent on Ca(2+). Interacts (via C-terminus) with TMEM106B (via N-terminus). Interacts with ZDHHC17 (via ANK repeats). Interacts with ZDHHC13 (via ANK repeats). In terms of processing, palmitoylated. Probably depalmitoylated by ABHD17A, ABHD17B and ABHD17C. During neuronal polarization, palmitoylation and depalmitoylation cycles regulate MAP6 shuttling between secretory vesicles and microtubules, and its polarized distribution in the axon. In terms of tissue distribution, expressed in brain (at protein level). Expressed in spinal cord. Isoform 2 expression is up-regulated in the prefrontal cortex (Brodmann's area 46) of patients with schizophrenia (postmortem brain study).

The protein resides in the cytoplasm. It is found in the cytoskeleton. It localises to the golgi apparatus. Its subcellular location is the cell projection. The protein localises to the axon. The protein resides in the dendrite. It is found in the cytoplasmic vesicle. It localises to the secretory vesicle membrane. Involved in microtubule stabilization in many cell types, including neuronal cells. Specifically has microtubule cold stabilizing activity. Involved in dendrite morphogenesis and maintenance by regulating lysosomal trafficking via its interaction with TMEM106B. Regulates KIF5A-mediated axonal cargo transport. Regulates axonal growth during neuron polarization. In Homo sapiens (Human), this protein is Microtubule-associated protein 6 (MAP6).